Consider the following 368-residue polypeptide: tRNA-specific 2-thiouridylase MnmA (368 aa).

Residues 11–18 and methionine 37 contribute to the ATP site; that span reads GMSGGVDS. The tract at residues 97-99 is interaction with target base in tRNA; the sequence is NPD. Catalysis depends on cysteine 102, which acts as the Nucleophile. A disulfide bridge connects residues cysteine 102 and cysteine 199. ATP is bound at residue glycine 127. An interaction with tRNA region spans residues 149–151; the sequence is KDQ. Cysteine 199 functions as the Cysteine persulfide intermediate in the catalytic mechanism. The interval 311 to 312 is interaction with tRNA; the sequence is RY.

It belongs to the MnmA/TRMU family.

The protein localises to the cytoplasm. The enzyme catalyses S-sulfanyl-L-cysteinyl-[protein] + uridine(34) in tRNA + AH2 + ATP = 2-thiouridine(34) in tRNA + L-cysteinyl-[protein] + A + AMP + diphosphate + H(+). In terms of biological role, catalyzes the 2-thiolation of uridine at the wobble position (U34) of tRNA, leading to the formation of s(2)U34. In Baumannia cicadellinicola subsp. Homalodisca coagulata, this protein is tRNA-specific 2-thiouridylase MnmA.